The following is a 354-amino-acid chain: Chorismate synthase (354 aa).

An NADP(+)-binding site is contributed by Arg-48. Residues 125–127, Gly-277, 292–296, and Arg-318 each bind FMN; these read RAS and KPIPS.

Belongs to the chorismate synthase family. In terms of assembly, homotetramer. Requires FMNH2 as cofactor.

The catalysed reaction is 5-O-(1-carboxyvinyl)-3-phosphoshikimate = chorismate + phosphate. It participates in metabolic intermediate biosynthesis; chorismate biosynthesis; chorismate from D-erythrose 4-phosphate and phosphoenolpyruvate: step 7/7. Functionally, catalyzes the anti-1,4-elimination of the C-3 phosphate and the C-6 proR hydrogen from 5-enolpyruvylshikimate-3-phosphate (EPSP) to yield chorismate, which is the branch point compound that serves as the starting substrate for the three terminal pathways of aromatic amino acid biosynthesis. This reaction introduces a second double bond into the aromatic ring system. The polypeptide is Chorismate synthase (Nitratidesulfovibrio vulgaris (strain DP4) (Desulfovibrio vulgaris)).